Consider the following 130-residue polypeptide: UPF0102 protein RPE_0358 (130 aa).

This sequence belongs to the UPF0102 family.

This is UPF0102 protein RPE_0358 from Rhodopseudomonas palustris (strain BisA53).